The primary structure comprises 2359 residues: Pre-mRNA-processing-splicing factor 8B (2359 aa).

The interval 1 to 50 (MWNIDGTSLAPPGTDGSRMQTPSHPADHPSYTAPSNRNTPTVPTPEDAEA) is disordered. Positions 32-41 (TAPSNRNTPT) are enriched in polar residues. Residues 2129–2260 (TYIMPKNILK…LTSYKLTQAG (132 aa)) form the MPN domain.

Its subcellular location is the nucleus. In terms of biological role, functions as a scaffold that mediates the ordered assembly of spliceosomal proteins and snRNAs. Required for the assembly of the U4/U6-U5 tri-snRNP complex. This Arabidopsis thaliana (Mouse-ear cress) protein is Pre-mRNA-processing-splicing factor 8B.